The chain runs to 178 residues: ATP synthase subunit delta (178 aa).

Belongs to the ATPase delta chain family. In terms of assembly, F-type ATPases have 2 components, F(1) - the catalytic core - and F(0) - the membrane proton channel. F(1) has five subunits: alpha(3), beta(3), gamma(1), delta(1), epsilon(1). F(0) has three main subunits: a(1), b(2) and c(10-14). The alpha and beta chains form an alternating ring which encloses part of the gamma chain. F(1) is attached to F(0) by a central stalk formed by the gamma and epsilon chains, while a peripheral stalk is formed by the delta and b chains.

It is found in the cell inner membrane. Its function is as follows. F(1)F(0) ATP synthase produces ATP from ADP in the presence of a proton or sodium gradient. F-type ATPases consist of two structural domains, F(1) containing the extramembraneous catalytic core and F(0) containing the membrane proton channel, linked together by a central stalk and a peripheral stalk. During catalysis, ATP synthesis in the catalytic domain of F(1) is coupled via a rotary mechanism of the central stalk subunits to proton translocation. This protein is part of the stalk that links CF(0) to CF(1). It either transmits conformational changes from CF(0) to CF(1) or is implicated in proton conduction. The protein is ATP synthase subunit delta of Polynucleobacter necessarius subsp. necessarius (strain STIR1).